The sequence spans 591 residues: Ketol-acid reductoisomerase, chloroplastic (591 aa).

The disordered stretch occupies residues 1 to 20 (MAAATSSIAPSLSCPSPSSS). The transit peptide at 1–52 (MAAATSSIAPSLSCPSPSSSSKTLWSSKARTLALPNIGFLSSSSKSLRSLTA) directs the protein to the chloroplast. Position 53 is an N-acetylthreonine (T53). The KARI N-terminal Rossmann domain occupies 102–300 (VRGGRDLFKH…ALGSPFTFAT (199 aa)). Residues 123–130 (GVIGWGSQ), 156–161 (RKGSRS), and 195–199 (SDAAQ) each bind NADP(+). H220 is a catalytic residue. KARI C-terminal knotted domains follow at residues 301–449 (TLEQ…RPAG) and 450–586 (DLGP…RPEL). Mg(2+) contacts are provided by D309, E313, E486, and E490. Residue S512 coordinates substrate.

This sequence belongs to the ketol-acid reductoisomerase family. In terms of assembly, homodimer. Mg(2+) serves as cofactor.

Its subcellular location is the plastid. The protein resides in the chloroplast. The catalysed reaction is (2R)-2,3-dihydroxy-3-methylbutanoate + NADP(+) = (2S)-2-acetolactate + NADPH + H(+). The enzyme catalyses (2R,3R)-2,3-dihydroxy-3-methylpentanoate + NADP(+) = (S)-2-ethyl-2-hydroxy-3-oxobutanoate + NADPH + H(+). The protein operates within amino-acid biosynthesis; L-isoleucine biosynthesis; L-isoleucine from 2-oxobutanoate: step 2/4. It functions in the pathway amino-acid biosynthesis; L-valine biosynthesis; L-valine from pyruvate: step 2/4. In Arabidopsis thaliana (Mouse-ear cress), this protein is Ketol-acid reductoisomerase, chloroplastic.